The following is a 211-amino-acid chain: Uracil phosphoribosyltransferase (211 aa).

5-phospho-alpha-D-ribose 1-diphosphate contacts are provided by residues R79, R104, and 131 to 139; that span reads DPMLATGGS. Residues I196 and 201 to 203 each bind uracil; that span reads GDA. Position 202 (D202) interacts with 5-phospho-alpha-D-ribose 1-diphosphate.

This sequence belongs to the UPRTase family. Mg(2+) serves as cofactor.

The enzyme catalyses UMP + diphosphate = 5-phospho-alpha-D-ribose 1-diphosphate + uracil. It participates in pyrimidine metabolism; UMP biosynthesis via salvage pathway; UMP from uracil: step 1/1. Allosterically activated by GTP. Functionally, catalyzes the conversion of uracil and 5-phospho-alpha-D-ribose 1-diphosphate (PRPP) to UMP and diphosphate. In Lactococcus lactis subsp. lactis (strain IL1403) (Streptococcus lactis), this protein is Uracil phosphoribosyltransferase.